The chain runs to 791 residues: MAYLLQGRLPINQDLLLMQKGTMMRKVRSKSWKKLRFFRLQDDGMTVWHARQAGGRAKPSFSISDVDTVREDHESELLRNLAEEFPLEQGFTIVFHGRRSNLDLVANSVQEAQTWMQGLQLLVGFVTNMDQQERLDQWLSDWFQRGDKNQDGRMSFGEVQRLLHLMNVEMDQEYAFQLFQTADTSQSGTLEGEEFVEFYKSLTQRPEVQELFEKFSSDGQKLTLLEFVDFLQEEQKEGERASDLALELIDRYEPSESGKLRHVLSMDGFLGYLCSKDGDIFNPTCHPLYQDMTQPLNHYYINSSHNTYLVGDQLCGQSSVEGYIRALKRGCRCVEVDIWDGPSGEPIVYHGHTLTSRIPFKDVVAAIGQYAFQTSDYPVILSLENHCSWEQQEIIVRHLTEILGDQLLTTALDGQPPTQLPSPEDLRGKILVKGKKLMLEEEEEEPEAELEAEQEARLDLEAQLESEPQDLSPRSEDKKKVVMCPLLCRPLCCQIMAQAPISKPGLLLFPKQKPKAILCPALSALVVYLKAVTFYSFTHSREHYHFYETSSFSETKAKSLIKEAGDEFVQHNAWQLSRVYPSGLRTDSSNYNPQEFWNAGCQMVAMNMQTAGLEMDLCDGLFRQNAGCGYVLKPDFLRDAQSSFHPERPISPFKAQTLIIQVISGQQLPKVDNTKEQSIVDPLVRVEIFGVRPDTTRQETSYVENNGFNPYWGQTLCFRILVPELALLRFVVKDYDWKSRNDFIGQYTLPWSCMQQGYRHIHLLSKDGLSLHPASIFVHICTQEVSEEAES.

The PH domain occupies 16–124 (LLMQKGTMMR…WMQGLQLLVG (109 aa)). A substrate binding region spans residues 26–53 (KVRSKSWKKLRFFRLQDDGMTVWHARQA). EF-hand domains follow at residues 134-169 (RLDQ…MNVE), 170-205 (MDQE…LTQR), and 207-237 (EVQE…EQKE). 10 residues coordinate Ca(2+): Asp147, Asn149, Asp151, Arg153, Glu158, Asp183, Ser185, Ser187, Thr189, and Glu194. The GBA motif lies at 213 to 243 (EKFSSDGQKLTLLEFVDFLQEEQKEGERASD). The 146-residue stretch at 290 to 435 (QDMTQPLNHY…LRGKILVKGK (146 aa)) folds into the PI-PLC X-box domain. His305 is a catalytic residue. Residues Asn306, Glu335, and Asp337 each contribute to the Ca(2+) site. His350 is a catalytic residue. Glu384 contributes to the Ca(2+) binding site. Residues Lys433, Lys435, Ser551, and Arg578 each coordinate substrate. A PI-PLC Y-box domain is found at 522 to 638 (LSALVVYLKA…GYVLKPDFLR (117 aa)). The C2 domain maps to 638 to 765 (RDAQSSFHPE…QGYRHIHLLS (128 aa)). 6 residues coordinate Ca(2+): Ile679, Asp681, Asn705, Asp734, Tyr735, and Asp736. The PDZ-binding motif lies at 760 to 763 (HIHL).

In terms of assembly, interacts with GRIP1. Interacts (via GBA motif) with guanine nucleotide-binding protein G(i) alpha subunit GNAI3 (inactive GDP-bound form); low-affinity interaction. Ca(2+) serves as cofactor.

The protein localises to the membrane. The protein resides in the nucleus. It localises to the cytoplasm. Its subcellular location is the endoplasmic reticulum. It catalyses the reaction a 1,2-diacyl-sn-glycero-3-phospho-(1D-myo-inositol-4,5-bisphosphate) + H2O = 1D-myo-inositol 1,4,5-trisphosphate + a 1,2-diacyl-sn-glycerol + H(+). The catalysed reaction is a 1,2-diacyl-sn-glycero-3-phospho-(1D-myo-inositol) + H2O = 1D-myo-inositol 1-phosphate + a 1,2-diacyl-sn-glycerol + H(+). Hydrolyzes the phosphatidylinositol 4,5-bisphosphate (PIP2) to generate 2 second messenger molecules diacylglycerol (DAG) and inositol 1,4,5-trisphosphate (IP3). DAG mediates the activation of protein kinase C (PKC), while IP3 releases Ca(2+) from intracellular stores. Required for acrosome reaction in sperm during fertilization, probably by acting as an important enzyme for intracellular Ca(2+) mobilization in the zona pellucida-induced acrosome reaction. May play a role in cell growth. Modulates the liver regeneration in cooperation with nuclear PKC. Overexpression up-regulates the Erk signaling pathway and proliferation. The protein is 1-phosphatidylinositol 4,5-bisphosphate phosphodiesterase delta-4 (PLCD4) of Bos taurus (Bovine).